The following is a 31-amino-acid chain: Cytochrome b6-f complex subunit 6 (31 aa).

A helical transmembrane segment spans residues 4–26 (LTSYFGFLLAASTITPALFIGLN).

This sequence belongs to the PetL family. The 4 large subunits of the cytochrome b6-f complex are cytochrome b6, subunit IV (17 kDa polypeptide, PetD), cytochrome f and the Rieske protein, while the 4 small subunits are PetG, PetL, PetM and PetN. The complex functions as a dimer.

The protein resides in the plastid. Its subcellular location is the chloroplast thylakoid membrane. Functionally, component of the cytochrome b6-f complex, which mediates electron transfer between photosystem II (PSII) and photosystem I (PSI), cyclic electron flow around PSI, and state transitions. PetL is important for photoautotrophic growth as well as for electron transfer efficiency and stability of the cytochrome b6-f complex. This is Cytochrome b6-f complex subunit 6 from Phalaenopsis aphrodite subsp. formosana (Moth orchid).